Here is a 361-residue protein sequence, read N- to C-terminus: Beta-hexosaminidase (361 aa).

Substrate contacts are provided by residues D69, R77, R144, and 174–175 (KH). H187 functions as the Proton donor/acceptor in the catalytic mechanism. D258 serves as the catalytic Nucleophile.

The protein belongs to the glycosyl hydrolase 3 family. NagZ subfamily.

It is found in the cytoplasm. The enzyme catalyses Hydrolysis of terminal non-reducing N-acetyl-D-hexosamine residues in N-acetyl-beta-D-hexosaminides.. It participates in cell wall biogenesis; peptidoglycan recycling. Its function is as follows. Plays a role in peptidoglycan recycling by cleaving the terminal beta-1,4-linked N-acetylglucosamine (GlcNAc) from peptide-linked peptidoglycan fragments, giving rise to free GlcNAc, anhydro-N-acetylmuramic acid and anhydro-N-acetylmuramic acid-linked peptides. This Neisseria meningitidis serogroup A / serotype 4A (strain DSM 15465 / Z2491) protein is Beta-hexosaminidase.